The sequence spans 337 residues: Palmitoyltransferase ZDHHC15 (337 aa).

Residues 1–20 (MRRGWKMALSGGLRCCRRVL) lie on the Cytoplasmic side of the membrane. The helical transmembrane segment at 21–41 (SWVPVLVIVLVVLWSYYAYVF) threads the bilayer. The Lumenal portion of the chain corresponds to 42 to 56 (ELCLVTVLSPAEKVI). Residues 57–77 (YLILYHAIFVFFTWTYWKSIF) form a helical membrane-spanning segment. The Cytoplasmic segment spans residues 78–172 (TLPQQPNQKF…NNCIGFSNYK (95 aa)). A DHHC domain is found at 129-179 (RFCDRCHLIKPDRCHHCSVCAMCVLKMDHHCPWVNNCIGFSNYKFFLQFLA). The Zn(2+) site is built by cysteine 131, cysteine 134, histidine 144, cysteine 145, cysteine 148, cysteine 151, and histidine 158. Cysteine 159 (S-palmitoyl cysteine intermediate) is an active-site residue. Position 165 (cysteine 165) interacts with Zn(2+). The chain crosses the membrane as a helical span at residues 173-193 (FFLQFLAYSVLYCLYIATTVF). The Lumenal portion of the chain corresponds to 194–210 (SYFIKYWRGELPSVRSK). The helical transmembrane segment at 211–234 (FHVLFLLFVACMFFVSLVILFGYH) threads the bilayer. The Cytoplasmic portion of the chain corresponds to 235 to 337 (CWLVSRNKTT…SSSLAVETET (103 aa)). Residues 306–337 (PLLANEETWEDNEDDNQDYPEGSSSLAVETET) form a disordered region. The span at 312 to 323 (ETWEDNEDDNQD) shows a compositional bias: acidic residues. Residues 327–337 (GSSSLAVETET) show a composition bias toward polar residues.

It belongs to the DHHC palmitoyltransferase family. Post-translationally, autopalmitoylated (in vitro). As to expression, expressed in placenta, liver, lung, kidney, heart and brain.

It localises to the golgi apparatus membrane. Its subcellular location is the postsynaptic density. The enzyme catalyses L-cysteinyl-[protein] + hexadecanoyl-CoA = S-hexadecanoyl-L-cysteinyl-[protein] + CoA. The catalysed reaction is L-cysteinyl-[protein] + tetradecanoyl-CoA = S-tetradecanoyl-L-cysteinyl-[protein] + CoA. It carries out the reaction L-cysteinyl-[protein] + octadecanoyl-CoA = S-octadecanoyl-L-cysteinyl-[protein] + CoA. Its function is as follows. Palmitoyltransferase that catalyzes the addition of palmitate onto various protein substrates. Has no stringent fatty acid selectivity and in addition to palmitate can also transfer onto target proteins myristate from tetradecanoyl-CoA and stearate from octadecanoyl-CoA. Palmitoylates IGF2R and SORT1, promoting their partitioning to an endosomal membrane subdomain where they can interact with the retromer cargo-selective complex. Thereby, regulates retrograde transport from endosomes to the Golgi apparatus of these lysosomal sorting receptors and plays a role in trafficking of lysosomal proteins. In the nervous system, catalyzes the palmitoylation of DLG4/PSD95 and regulates its synaptic clustering and function in synaptogenesis. Could be involved in the differentiation of dopaminergic neurons and the development of the diencephalon. Could also catalyze the palmitoylation of GAP43. Could also palmitoylate DNAJC5 and regulate its localization to the Golgi membrane. Could also palmitoylate FYN as shown in vitro. May palmitoylate CALHM3 subunit of gustatory voltage-gated ion channels and modulate channel gating and kinetics. This Homo sapiens (Human) protein is Palmitoyltransferase ZDHHC15.